Here is a 388-residue protein sequence, read N- to C-terminus: Glutamine transporter 2 (388 aa).

The next 11 membrane-spanning stretches (helical) occupy residues 5 to 27 (LFGSALILSGTALGAGMLAIPMV), 31 to 53 (FGLFYSTLLMLIICAGTTYAALL), 86 to 106 (LFYLLLFCMLIAYILGAADLI), 121 to 141 (FAQVAFTLFASAFVVCGTQII), 147 to 167 (LLFFFMISMLVLTLIILIPGM), 186 to 206 (TSTILFTSFASMPVIPSLVAY), 218 to 238 (MVILGSIIPLICYLVWLYAVV), 268 to 288 (IILSIFTSLALLTSFLGVAMA), 302 to 322 (IVTYVCTFILPLLGAGLAADQ), 326 to 346 (VLGYAGVILVFLAIFIPLAMV), and 368 to 388 (GGKLALGLTLLFGLLLLISQI).

The protein belongs to the amino acid/polyamine transporter 2 family.

It localises to the cell inner membrane. Seems to be involved in glutamine transport. Complements an E.coli glnP deletion mutant. The chain is Glutamine transporter 2 from Aliivibrio fischeri (strain ATCC 700601 / ES114) (Vibrio fischeri).